The following is a 104-amino-acid chain: Inclusion membrane protein F (104 aa).

Helical transmembrane passes span 39–59 and 70–90; these read LVVA…SLVA and LAVL…VLFI.

It localises to the secreted. The protein localises to the host vacuole. The protein resides in the host pathogen-containing vacuole. It is found in the host pathogen-containing vacuole membrane. Inclusion membrane protein probably involved in early modification events of the chlamydial inclusion. This chain is Inclusion membrane protein F, found in Chlamydia trachomatis serovar L2 (strain ATCC VR-902B / DSM 19102 / 434/Bu).